We begin with the raw amino-acid sequence, 359 residues long: Homeotic protein knotted-1 (359 aa).

Disordered regions lie at residues 1 to 34 and 213 to 232; these read MEEITQHFGVGASSHGHGHGQHHHHHHHHHPWAS and LSSGSSEEDQEGSGGETELP. A compositionally biased stretch (basic residues) spans 16–31; that stretch reads GHGHGQHHHHHHHHHP. Residues 242–262 enclose the ELK domain; sequence ELKHHLLKKYSGYLSSLKQEL. A DNA-binding region (homeobox; TALE-type) is located at residues 263 to 326; that stretch reads SKKKKKGKLP…NQRKRHWKPS (64 aa).

Belongs to the TALE/KNOX homeobox family. In terms of assembly, forms homodimers. Binds to MBP2C; this interaction reduces RNA binding capacity. In terms of tissue distribution, expressed in apical meristems of vegetative and floral stems as well as in the underlying ground meristem. Specifically expressed in vascular bundles developing both in the leaf and stem. Very low levels of expression in leaves.

The protein resides in the nucleus. It localises to the cell junction. The protein localises to the plasmodesma. Its subcellular location is the cytoplasm. Its function is as follows. Binds to RNA. Possible transcription factor that regulates genes involved in development. Mutations in KN-1 alter leaf development. Foci of cells along the lateral vein do not differentiate properly but continue to divide, forming knots. May participate in the switch from indeterminate to determinate cell fates. Probably binds to the DNA sequence 5'-TGAC-3'. The protein is Homeotic protein knotted-1 (KN-1) of Zea mays (Maize).